The following is a 357-amino-acid chain: Selenide, water dikinase (357 aa).

C25 is a catalytic residue. Residues K28 and 57 to 59 contribute to the ATP site; that span reads TAD. A Mg(2+)-binding site is contributed by D60. ATP is bound by residues D77, D100, and 148–150; that span reads GHS. A Mg(2+)-binding site is contributed by D100. Position 236 (D236) interacts with Mg(2+).

This sequence belongs to the selenophosphate synthase 1 family. Class I subfamily. As to quaternary structure, homodimer. The cofactor is Mg(2+).

The catalysed reaction is hydrogenselenide + ATP + H2O = selenophosphate + AMP + phosphate + 2 H(+). Functionally, synthesizes selenophosphate from selenide and ATP. In Pseudomonas straminea, this protein is Selenide, water dikinase.